The following is a 182-amino-acid chain: UPF0149 protein CGSHiEE_07975 (182 aa).

It belongs to the UPF0149 family.

This chain is UPF0149 protein CGSHiEE_07975, found in Haemophilus influenzae (strain PittEE).